A 242-amino-acid chain; its full sequence is Ubiquinone biosynthesis O-methyltransferase (242 aa).

The S-adenosyl-L-methionine site is built by arginine 44, glycine 64, aspartate 85, and methionine 129.

The protein belongs to the methyltransferase superfamily. UbiG/COQ3 family.

It catalyses the reaction a 3-demethylubiquinol + S-adenosyl-L-methionine = a ubiquinol + S-adenosyl-L-homocysteine + H(+). It carries out the reaction a 3-(all-trans-polyprenyl)benzene-1,2-diol + S-adenosyl-L-methionine = a 2-methoxy-6-(all-trans-polyprenyl)phenol + S-adenosyl-L-homocysteine + H(+). The protein operates within cofactor biosynthesis; ubiquinone biosynthesis. In terms of biological role, O-methyltransferase that catalyzes the 2 O-methylation steps in the ubiquinone biosynthetic pathway. This chain is Ubiquinone biosynthesis O-methyltransferase, found in Salmonella arizonae (strain ATCC BAA-731 / CDC346-86 / RSK2980).